Here is a 260-residue protein sequence, read N- to C-terminus: UPF0246 protein Bamb_2261 (260 aa).

It belongs to the UPF0246 family.

The protein is UPF0246 protein Bamb_2261 of Burkholderia ambifaria (strain ATCC BAA-244 / DSM 16087 / CCUG 44356 / LMG 19182 / AMMD) (Burkholderia cepacia (strain AMMD)).